Reading from the N-terminus, the 211-residue chain is Dephospho-CoA kinase (211 aa).

The DPCK domain occupies 7 to 211 (LIGVIGRSGA…ILTRRGVLGE (205 aa)). 15 to 20 (GAGKNV) contacts ATP.

It belongs to the CoaE family.

It is found in the cytoplasm. The enzyme catalyses 3'-dephospho-CoA + ATP = ADP + CoA + H(+). It functions in the pathway cofactor biosynthesis; coenzyme A biosynthesis; CoA from (R)-pantothenate: step 5/5. Catalyzes the phosphorylation of the 3'-hydroxyl group of dephosphocoenzyme A to form coenzyme A. The protein is Dephospho-CoA kinase of Treponema pallidum (strain Nichols).